Consider the following 316-residue polypeptide: Heme oxygenase 2 (316 aa).

A compositionally biased stretch (acidic residues) spans 1–12; the sequence is MSAEVETSEGVD. The tract at residues 1–29 is disordered; the sequence is MSAEVETSEGVDESEKKNSGALEKENQMR. An N-acetylserine modification is found at serine 2. At serine 2 the chain carries Phosphoserine. The segment covering 13-27 has biased composition (basic and acidic residues); sequence ESEKKNSGALEKENQ. A heme b-binding site is contributed by histidine 45. 2 HRM repeats span residues 264–269 and 281–286; these read KCPFYA and SCPFRT. S-nitrosocysteine is present on residues cysteine 265 and cysteine 282.

Belongs to the heme oxygenase family. In terms of processing, S-nitrosylated by BLVRB.

Its subcellular location is the microsome. The protein localises to the endoplasmic reticulum. The enzyme catalyses heme b + 3 reduced [NADPH--hemoprotein reductase] + 3 O2 = biliverdin IXalpha + CO + Fe(2+) + 3 oxidized [NADPH--hemoprotein reductase] + 3 H2O + H(+). Its function is as follows. Heme oxygenase cleaves the heme ring at the alpha methene bridge to form biliverdin. Biliverdin is subsequently converted to bilirubin by biliverdin reductase. Under physiological conditions, the activity of heme oxygenase is highest in the spleen, where senescent erythrocytes are sequestrated and destroyed. Heme oxygenase 2 could be implicated in the production of carbon monoxide in brain where it could act as a neurotransmitter. This chain is Heme oxygenase 2 (HMOX2), found in Macaca fascicularis (Crab-eating macaque).